The sequence spans 491 residues: Large ribosomal subunit protein mL101 (rPPR4) (491 aa).

PPR repeat units follow at residues 122-156 (TELTYGSLLNCYCKELLTEKAEGLLNKMKELNITP), 157-191 (SSMSYNSLMTLYTKTGETEKVPAMIQELKAENVMP), 192-226 (DSYTYNVWMRALAATNDISGVERVIEEMNRDGRVA), 228-262 (DWTTYSNMASIYVDAGLSQKAEKALQELEMKNTQR), 263-293 (DFTAYQFLITLYGRLGKLTEVYRIWRSLRLA), 298-328 (SNVAYLNMIQVLVKLNDLPGAETLFKEWQAN), 333-367 (DIRIVNVLIGAYAQEGLIQKANELKEKAPRRGGKL), and 368-402 (NAKTWEIFMDYYVKSGDMARALECMSKAVSIGKGD).

Belongs to the PPR family. P subfamily. As to quaternary structure, component of the mitochondrial ribosome large subunit.

It localises to the mitochondrion. The chain is Large ribosomal subunit protein mL101 (rPPR4) from Arabidopsis thaliana (Mouse-ear cress).